An 89-amino-acid polypeptide reads, in one-letter code: Cornifin-A (89 aa).

A disordered region spans residues 1 to 29 (MNSQQQKQPCTPPPQPQQQQVKQPCQPPP). 8 tandem repeats follow at residues 3-14 (SQQQKQPCTPPP), 18-29 (QQQVKQPCQPPP), 31-38 (EPCIPKTK), 39-46 (EPCHPKVP), 47-54 (EPCHPKVP), 55-62 (EPCQPKVP), 63-70 (EPCQPKVP), and 71-78 (EPCPSTVT). Positions 3-29 (SQQQKQPCTPPPQPQQQQVKQPCQPPP) are 2 X 12 AA approximate repeats. Residues 31–78 (EPCIPKTKEPCHPKVPEPCHPKVPEPCQPKVPEPCQPKVPEPCPSTVT) are 6 X 8 AA approximate tandem repeats. Positions 68–89 (KVPEPCPSTVTPAPAQQKTKQK) are disordered. The segment covering 75–89 (STVTPAPAQQKTKQK) has biased composition (polar residues).

This sequence belongs to the cornifin (SPRR) family.

Its subcellular location is the cytoplasm. Cross-linked envelope protein of keratinocytes. It is a keratinocyte protein that first appears in the cell cytosol, but ultimately becomes cross-linked to membrane proteins by transglutaminase. All that results in the formation of an insoluble envelope beneath the plasma membrane. This chain is Cornifin-A (SPRR1A), found in Homo sapiens (Human).